A 361-amino-acid polypeptide reads, in one-letter code: Chorismate synthase (361 aa).

NADP(+)-binding residues include Arg-48 and Arg-54. FMN is bound by residues 125–127 (RSS), 238–239 (NA), Gly-278, 293–297 (KPTSS), and Arg-319.

The protein belongs to the chorismate synthase family. In terms of assembly, homotetramer. It depends on FMNH2 as a cofactor.

The enzyme catalyses 5-O-(1-carboxyvinyl)-3-phosphoshikimate = chorismate + phosphate. It participates in metabolic intermediate biosynthesis; chorismate biosynthesis; chorismate from D-erythrose 4-phosphate and phosphoenolpyruvate: step 7/7. Functionally, catalyzes the anti-1,4-elimination of the C-3 phosphate and the C-6 proR hydrogen from 5-enolpyruvylshikimate-3-phosphate (EPSP) to yield chorismate, which is the branch point compound that serves as the starting substrate for the three terminal pathways of aromatic amino acid biosynthesis. This reaction introduces a second double bond into the aromatic ring system. The protein is Chorismate synthase of Salmonella choleraesuis (strain SC-B67).